The sequence spans 63 residues: Cecropin-1 (63 aa).

The N-terminal stretch at 1–21 is a signal peptide; it reads MNFNKVFILVAIVIAIFAGQT. Residues 22-23 constitute a propeptide that is removed on maturation; that stretch reads EA. Arginine amide is present on R62.

It belongs to the cecropin family.

The protein resides in the secreted. In terms of biological role, cecropins have lytic and antibacterial activity against several Gram-positive and Gram-negative bacteria. This is Cecropin-1 (CEC1) from Ceratitis capitata (Mediterranean fruit fly).